The primary structure comprises 271 residues: uncharacterized protein (271 aa).

The first 18 residues, 1-18 (MKGFFLIAGFLLFARALC), serve as a signal peptide directing secretion. The Lumenal segment spans residues 19–187 (ASWNVEEGTL…FSPPPKRANY (169 aa)). Residues 188–208 (FLSICFSVSVVVSLIGLLGVW) form a helical membrane-spanning segment. Over 209–230 (QKLLPKSNVYSVSSSSFARTFG) the chain is Cytoplasmic. Residues 231-251 (FASLAVAEILLFIYWTSLSIF) form a helical membrane-spanning segment. Over 252–271 (QFGAYAAGVAIMCGIAAKSL) the chain is Lumenal.

It localises to the endoplasmic reticulum membrane. This is an uncharacterized protein from Schizosaccharomyces pombe (strain 972 / ATCC 24843) (Fission yeast).